Reading from the N-terminus, the 245-residue chain is Small ribosomal subunit protein uS3 (245 aa).

A KH type-2 domain is found at 38-106 (IRKYLNTRLA…EVQINIFEIK (69 aa)). The tract at residues 225 to 245 (YEGSGDKSVKRRKRNGIKKNE) is disordered. The segment covering 233 to 245 (VKRRKRNGIKKNE) has biased composition (basic residues).

Belongs to the universal ribosomal protein uS3 family. As to quaternary structure, part of the 30S ribosomal subunit. Forms a tight complex with proteins S10 and S14.

Its function is as follows. Binds the lower part of the 30S subunit head. Binds mRNA in the 70S ribosome, positioning it for translation. In Azobacteroides pseudotrichonymphae genomovar. CFP2, this protein is Small ribosomal subunit protein uS3.